Consider the following 185-residue polypeptide: Ribosome-recycling factor (185 aa).

This sequence belongs to the RRF family.

Its subcellular location is the cytoplasm. Its function is as follows. Responsible for the release of ribosomes from messenger RNA at the termination of protein biosynthesis. May increase the efficiency of translation by recycling ribosomes from one round of translation to another. In Mycobacterium leprae (strain Br4923), this protein is Ribosome-recycling factor.